A 332-amino-acid chain; its full sequence is Packaging enzyme P4 (332 aa).

The segment at 111-138 (RWPSEGIYSGVTALMGATGSGKSITLNE) is involved in the regulation and mechanisms of transcription, replication and genome packaging. ATP is bound at residue 126–133 (GATGSGKS). Residues 310 to 332 (LERGSVDTDDRNSAPRRGANFSL) are disordered. Positions 313-322 (GSVDTDDRNS) are enriched in basic and acidic residues.

Homohexamer. Part of the packaging complex composed of RDRP, P4 and P7.

The protein resides in the virion. The catalysed reaction is a ribonucleoside 5'-triphosphate + H2O = a ribonucleoside 5'-diphosphate + phosphate + H(+). Packaging motor with helicase and translocase activities. Part of the packaging complex that packages the viral RNA segments, replicate them into a double-stranded form and transcribe them. is one of the structural proteins of the polyhedral procapsid, which is responsible for genomic replication and transcription. Displays single-stranded RNA-stimulated NTPase activity. The polypeptide is Packaging enzyme P4 (P4) (Pseudomonas savastanoi pv. phaseolicola (Pseudomonas syringae pv. phaseolicola)).